Consider the following 344-residue polypeptide: Fructose-1,6-bisphosphatase class 1 (344 aa).

Residues E91, D110, L112, and D113 each coordinate Mg(2+). Substrate-binding positions include 113-116 (DGSS) and N200. A Mg(2+)-binding site is contributed by E272.

The protein belongs to the FBPase class 1 family. Homotetramer. Mg(2+) serves as cofactor.

The protein resides in the cytoplasm. The catalysed reaction is beta-D-fructose 1,6-bisphosphate + H2O = beta-D-fructose 6-phosphate + phosphate. The protein operates within carbohydrate biosynthesis; Calvin cycle. This Rhodopseudomonas palustris (strain BisA53) protein is Fructose-1,6-bisphosphatase class 1.